The chain runs to 344 residues: Arylacetonitrilase (344 aa).

In terms of domain architecture, CN hydrolase spans 5 to 290 (LRVAVTQAEP…EGIVYADLDL (286 aa)). E45 acts as the Proton acceptor in catalysis. K126 is an active-site residue. C167 acts as the Nucleophile in catalysis. Residues 324 to 344 (VIPRDEEEPSRKANVVVPKQE) are disordered.

It belongs to the carbon-nitrogen hydrolase superfamily. Nitrilase family.

It carries out the reaction a nitrile + 2 H2O = a carboxylate + NH4(+). It catalyses the reaction 4-chlorophenylacetonitrile + 2 H2O = 4-chlorophenylacetate + NH4(+). Functionally, nitrilase that hydrolyzes preferentially phenylacetonitrile and (R,S)-mandelonitrile. Also acts on dinitriles like phenylenediacetonitriles (PDAs) 1,2-PDA, 1,3-PDA, and 1,4-PDA, and cyanophenyl acetonitriles (CPAs) 2-CPA and 4-CPA. The sequence is that of Arylacetonitrilase from Macrophomina phaseolina (strain MS6) (Charcoal rot fungus).